The following is a 293-amino-acid chain: Pyridoxal 5'-phosphate synthase subunit PdxS (293 aa).

Asp-23 contributes to the D-ribose 5-phosphate binding site. Catalysis depends on Lys-80, which acts as the Schiff-base intermediate with D-ribose 5-phosphate. Gly-152 is a D-ribose 5-phosphate binding site. Arg-164 serves as a coordination point for D-glyceraldehyde 3-phosphate. D-ribose 5-phosphate-binding positions include Gly-213 and 234–235 (GS).

This sequence belongs to the PdxS/SNZ family. In terms of assembly, in the presence of PdxT, forms a dodecamer of heterodimers.

It catalyses the reaction aldehydo-D-ribose 5-phosphate + D-glyceraldehyde 3-phosphate + L-glutamine = pyridoxal 5'-phosphate + L-glutamate + phosphate + 3 H2O + H(+). It participates in cofactor biosynthesis; pyridoxal 5'-phosphate biosynthesis. In terms of biological role, catalyzes the formation of pyridoxal 5'-phosphate from ribose 5-phosphate (RBP), glyceraldehyde 3-phosphate (G3P) and ammonia. The ammonia is provided by the PdxT subunit. Can also use ribulose 5-phosphate and dihydroxyacetone phosphate as substrates, resulting from enzyme-catalyzed isomerization of RBP and G3P, respectively. This chain is Pyridoxal 5'-phosphate synthase subunit PdxS, found in Chloroflexus aurantiacus (strain ATCC 29366 / DSM 635 / J-10-fl).